A 450-amino-acid chain; its full sequence is Methylenetetrahydrofolate--tRNA-(uracil-5-)-methyltransferase TrmFO (450 aa).

9–14 (GGGMAG) provides a ligand contact to FAD.

This sequence belongs to the MnmG family. TrmFO subfamily. Requires FAD as cofactor.

It is found in the cytoplasm. The enzyme catalyses uridine(54) in tRNA + (6R)-5,10-methylene-5,6,7,8-tetrahydrofolate + NADH + H(+) = 5-methyluridine(54) in tRNA + (6S)-5,6,7,8-tetrahydrofolate + NAD(+). It carries out the reaction uridine(54) in tRNA + (6R)-5,10-methylene-5,6,7,8-tetrahydrofolate + NADPH + H(+) = 5-methyluridine(54) in tRNA + (6S)-5,6,7,8-tetrahydrofolate + NADP(+). Catalyzes the folate-dependent formation of 5-methyl-uridine at position 54 (M-5-U54) in all tRNAs. The protein is Methylenetetrahydrofolate--tRNA-(uracil-5-)-methyltransferase TrmFO of Roseobacter denitrificans (strain ATCC 33942 / OCh 114) (Erythrobacter sp. (strain OCh 114)).